The following is a 282-amino-acid chain: Shikimate dehydrogenase (NADP(+)) (282 aa).

Residues 15–17 (SKS) and Thr-62 contribute to the shikimate site. Lys-66 (proton acceptor) is an active-site residue. Shikimate is bound by residues Asn-87 and Asp-103. Residues 127–131 (GAGGA), 151–156 (NRTHTK), and Met-220 contribute to the NADP(+) site. Tyr-222 contributes to the shikimate binding site. Gly-244 is a binding site for NADP(+).

The protein belongs to the shikimate dehydrogenase family. Homodimer.

The enzyme catalyses shikimate + NADP(+) = 3-dehydroshikimate + NADPH + H(+). It participates in metabolic intermediate biosynthesis; chorismate biosynthesis; chorismate from D-erythrose 4-phosphate and phosphoenolpyruvate: step 4/7. In terms of biological role, involved in the biosynthesis of the chorismate, which leads to the biosynthesis of aromatic amino acids. Catalyzes the reversible NADPH linked reduction of 3-dehydroshikimate (DHSA) to yield shikimate (SA). The protein is Shikimate dehydrogenase (NADP(+)) of Shewanella putrefaciens (strain CN-32 / ATCC BAA-453).